The primary structure comprises 397 residues: Tetratricopeptide repeat protein 4 homolog (397 aa).

TPR repeat units follow at residues 90–125, 130–163, and 164–197; these read AETFKNLGNDYFREGKSRFNDALYYYNKALSVKCND, SIYLSNRAAINMELGNYGLVIKDCTVSVEFNPLN, and MKAYSRMARAQLQLSKYQDSIKTCDLGLSHEPTN.

This sequence belongs to the TTC4 family.

This is Tetratricopeptide repeat protein 4 homolog (ttc4) from Dictyostelium discoideum (Social amoeba).